The sequence spans 177 residues: ATP-dependent protease subunit HslV (177 aa).

Residue Thr-5 is part of the active site. Residues Gly-161, Cys-164, and Thr-167 each coordinate Na(+).

This sequence belongs to the peptidase T1B family. HslV subfamily. A double ring-shaped homohexamer of HslV is capped on each side by a ring-shaped HslU homohexamer. The assembly of the HslU/HslV complex is dependent on binding of ATP.

The protein localises to the cytoplasm. It catalyses the reaction ATP-dependent cleavage of peptide bonds with broad specificity.. Its activity is regulated as follows. Allosterically activated by HslU binding. Its function is as follows. Protease subunit of a proteasome-like degradation complex believed to be a general protein degrading machinery. The polypeptide is ATP-dependent protease subunit HslV (Campylobacter concisus (strain 13826)).